Reading from the N-terminus, the 109-residue chain is Cell division protein ZapA (109 aa).

Residues 21 to 99 (PDQRDALNQA…IEQALLEQGR (79 aa)) adopt a coiled-coil conformation.

It belongs to the ZapA family. Type 1 subfamily. In terms of assembly, homodimer. Interacts with FtsZ.

The protein resides in the cytoplasm. In terms of biological role, activator of cell division through the inhibition of FtsZ GTPase activity, therefore promoting FtsZ assembly into bundles of protofilaments necessary for the formation of the division Z ring. It is recruited early at mid-cell but it is not essential for cell division. The protein is Cell division protein ZapA of Shigella boydii serotype 18 (strain CDC 3083-94 / BS512).